The primary structure comprises 490 residues: Aspartyl/glutamyl-tRNA(Asn/Gln) amidotransferase subunit B (490 aa).

It belongs to the GatB/GatE family. GatB subfamily. Heterotrimer of A, B and C subunits.

The catalysed reaction is L-glutamyl-tRNA(Gln) + L-glutamine + ATP + H2O = L-glutaminyl-tRNA(Gln) + L-glutamate + ADP + phosphate + H(+). It catalyses the reaction L-aspartyl-tRNA(Asn) + L-glutamine + ATP + H2O = L-asparaginyl-tRNA(Asn) + L-glutamate + ADP + phosphate + 2 H(+). Functionally, allows the formation of correctly charged Asn-tRNA(Asn) or Gln-tRNA(Gln) through the transamidation of misacylated Asp-tRNA(Asn) or Glu-tRNA(Gln) in organisms which lack either or both of asparaginyl-tRNA or glutaminyl-tRNA synthetases. The reaction takes place in the presence of glutamine and ATP through an activated phospho-Asp-tRNA(Asn) or phospho-Glu-tRNA(Gln). This Burkholderia ambifaria (strain MC40-6) protein is Aspartyl/glutamyl-tRNA(Asn/Gln) amidotransferase subunit B.